Here is a 462-residue protein sequence, read N- to C-terminus: Fumarate hydratase class II (462 aa).

Substrate is bound by residues 97 to 99 (SGT), 127 to 130 (HPND), 137 to 139 (SSN), and Thr-185. His-186 serves as the catalytic Proton donor/acceptor. The active site involves Ser-316. Residues Ser-317 and 322–324 (KVN) each bind substrate.

Belongs to the class-II fumarase/aspartase family. Fumarase subfamily. In terms of assembly, homotetramer.

It localises to the cytoplasm. It catalyses the reaction (S)-malate = fumarate + H2O. The protein operates within carbohydrate metabolism; tricarboxylic acid cycle; (S)-malate from fumarate: step 1/1. Involved in the TCA cycle. Catalyzes the stereospecific interconversion of fumarate to L-malate. This chain is Fumarate hydratase class II, found in Halalkalibacterium halodurans (strain ATCC BAA-125 / DSM 18197 / FERM 7344 / JCM 9153 / C-125) (Bacillus halodurans).